Here is a 547-residue protein sequence, read N- to C-terminus: Chaperonin GroEL (547 aa).

Residues 30-33, Lys-51, 87-91, Gly-415, and Asp-495 each bind ATP; these read TLGP and DGTTT.

Belongs to the chaperonin (HSP60) family. In terms of assembly, forms a cylinder of 14 subunits composed of two heptameric rings stacked back-to-back. Interacts with the co-chaperonin GroES.

The protein localises to the cytoplasm. It catalyses the reaction ATP + H2O + a folded polypeptide = ADP + phosphate + an unfolded polypeptide.. Its function is as follows. Together with its co-chaperonin GroES, plays an essential role in assisting protein folding. The GroEL-GroES system forms a nano-cage that allows encapsulation of the non-native substrate proteins and provides a physical environment optimized to promote and accelerate protein folding. This chain is Chaperonin GroEL, found in Pasteurella multocida (strain Pm70).